Consider the following 430-residue polypeptide: Glucose-6-phosphate isomerase (430 aa).

Glu284 serves as the catalytic Proton donor. Active-site residues include His305 and Lys420.

Belongs to the GPI family.

The protein resides in the cytoplasm. It carries out the reaction alpha-D-glucose 6-phosphate = beta-D-fructose 6-phosphate. It participates in carbohydrate biosynthesis; gluconeogenesis. The protein operates within carbohydrate degradation; glycolysis; D-glyceraldehyde 3-phosphate and glycerone phosphate from D-glucose: step 2/4. Catalyzes the reversible isomerization of glucose-6-phosphate to fructose-6-phosphate. The sequence is that of Glucose-6-phosphate isomerase from Mycoplasma pneumoniae (strain ATCC 29342 / M129 / Subtype 1) (Mycoplasmoides pneumoniae).